Here is a 68-residue protein sequence, read N- to C-terminus: Large ribosomal subunit protein bL35 (68 aa).

2 stretches are compositionally biased toward basic residues: residues 1–11 (MPKLKTRSSAK) and 19–29 (SGKVKHGKAFA). The tract at residues 1-54 (MPKLKTRSSAKKRFDVKKSGKVKHGKAFAKHLFTFSKTPKSKRSNRGTGHLRDM) is disordered.

The protein belongs to the bacterial ribosomal protein bL35 family.

The sequence is that of Large ribosomal subunit protein bL35 from Myxococcus xanthus (strain DK1622).